A 328-amino-acid chain; its full sequence is Ethanol acetyltransferase 1 (328 aa).

Positions 39–309 constitute an AB hydrolase-1 domain; it reads PAIINIHGLL…TGHNLLLENP (271 aa). Catalysis depends on charge relay system residues S115, D139, and H302.

It belongs to the AB hydrolase superfamily.

Its subcellular location is the mitochondrion. It carries out the reaction ethanol + acetyl-CoA = ethyl acetate + CoA. The catalysed reaction is acetyl-CoA + H2O = acetate + CoA + H(+). It catalyses the reaction ethyl acetate + H2O = ethanol + acetate + H(+). Its function is as follows. Alcohol acetyltransferase that catalyzes the synthesis of ethyl acetate from ethanol and acetyl-CoA. Can also function as a thioesterase by hydrolyzing acetyl-CoA in the absence of ethanol, as well as esterase hydrolyzing ethyl acetate. This is Ethanol acetyltransferase 1 from Saccharomyces cerevisiae (strain ATCC 204508 / S288c) (Baker's yeast).